Reading from the N-terminus, the 1787-residue chain is ATP-dependent RNA helicase DEAH11, chloroplastic (1787 aa).

A chloroplast-targeting transit peptide spans 1–33; the sequence is MRNSFPPSDGGRSTTDRRQQSFPSSSTNRYNSR. Residues 1–75 form a disordered region; sequence MRNSFPPSDG…DRAPSSGFSP (75 aa). A compositionally biased stretch (polar residues) spans 20 to 60; the sequence is QSFPSSSTNRYNSRSAQSSPPLNHCTTWNQQHSQYHNTNFP. In terms of domain architecture, Helicase ATP-binding spans 313-477; sequence LKKIHCEQIM…LFDCGILHVN (165 aa). 326–333 serves as a coordination point for ATP; the sequence is GETGSGKS. The DEAH box motif lies at 424–427; sequence DEAH. In terms of domain architecture, Helicase C-terminal spans 507-673; that stretch reads DVVKMAVEIH…VALLRMLALG (167 aa). The segment at 1557–1764 is TRIAD supradomain; it reads IELECPICLS…EPCYAHLRTI (208 aa). Zn(2+) contacts are provided by C1561, C1564, C1577, H1579, C1582, C1585, C1604, C1609, C1649, C1654, C1672, C1675, C1680, C1683, H1688, C1693, C1719, and C1722. The RING-type 1 zinc finger occupies 1561 to 1609; it reads CPICLSEVDDGYSLEGCSHLFCKACLLEQFEASMRNFDAFPILCSHIDC. An IBR-type zinc finger spans residues 1628–1693; sequence DELISASLSA…HLEYHPLITC (66 aa). The RING-type 2; atypical zinc finger occupies 1719 to 1747; sequence CPICKSTIEKTDGCNHLQCRCGKHICWTC. C1732 is an active-site residue. Positions 1737 and 1739 each coordinate Zn(2+).

This sequence belongs to the DEAD box helicase family. DEAH subfamily.

Its subcellular location is the plastid. The protein resides in the chloroplast. It catalyses the reaction ATP + H2O = ADP + phosphate + H(+). The polypeptide is ATP-dependent RNA helicase DEAH11, chloroplastic (Arabidopsis thaliana (Mouse-ear cress)).